We begin with the raw amino-acid sequence, 312 residues long: Aminoacyl tRNA synthase complex-interacting multifunctional protein 1 (312 aa).

Methionine 1 bears the N-acetylmethionine mark. At alanine 2 the chain carries N-acetylalanine. The tract at residues 6–46 (AVLKRLEQKGAEADQIIEYLKQQVSLLKEKAILQATLREEK) is required for fibroblast proliferation. Residues 54-194 (KLKKEIEELK…APRTVVSGLV (141 aa)) form an interaction with HSP90B1 region. Residues 101 to 114 (AVTTVSSGTKEQIK) are required for endothelial cell death. The tract at residues 107-147 (SGTKEQIKGGTGDEKKAKEKIEKKGEKKEKKQQSIAGSADS) is disordered. Residues 111–138 (EQIKGGTGDEKKAKEKIEKKGEKKEKKQ) are compositionally biased toward basic and acidic residues. Residues 114-192 (KGGTGDEKKA…EIAPRTVVSG (79 aa)) are required for endothelial cell migration. Residue lysine 137 forms a Glycyl lysine isopeptide (Lys-Gly) (interchain with G-Cter in SUMO1) linkage. At serine 140 the chain carries Phosphoserine. The tRNA-binding domain occupies 151 to 252 (DVSRLDLRIG…NGSVPGDRIT (102 aa)). Lysine 269 bears the N6-succinyllysine mark.

Homodimer. Part of the multisynthetase complex (MSC), a multisubunit complex that groups tRNA ligases for Arg (RARS1), Asp (DARS1), Gln (QARS1), Ile (IARS1), Leu (LARS1), Lys (KARS1), Met (MARS1) the bifunctional ligase for Glu and Pro (EPRS1) and the auxiliary subunits AIMP1/p43, AIMP2/p38 and EEF1E1/p18. Interacts (via N-terminus) with RARS1 (via N-terminus). Part of a complex composed of RARS1, QARS1 and AIMP1. Interacts (via C-terminus) with SMURF2. Interacts (via N-terminus) with HSP90B1/gp96 (via C-terminus). Interacts with PSMA7. Interacts with TARS3. In terms of processing, cleaved by caspase-7 in response to apoptosis to produce EMAP-II.

It is found in the nucleus. It localises to the cytoplasm. The protein resides in the cytosol. Its subcellular location is the secreted. The protein localises to the endoplasmic reticulum. It is found in the golgi apparatus. Functionally, non-catalytic component of the multisynthase complex. Stimulates the catalytic activity of cytoplasmic arginyl-tRNA synthase. Binds tRNA. Possesses inflammatory cytokine activity. Negatively regulates TGF-beta signaling through stabilization of SMURF2 by binding to SMURF2 and inhibiting its SMAD7-mediated degradation. Involved in glucose homeostasis through induction of glucagon secretion at low glucose levels. Promotes dermal fibroblast proliferation and wound repair. Regulates KDELR1-mediated retention of HSP90B1/gp96 in the endoplasmic reticulum. Plays a role in angiogenesis by inducing endothelial cell migration at low concentrations and endothelian cell apoptosis at high concentrations. Induces maturation of dendritic cells and monocyte cell adhesion. Modulates endothelial cell responses by degrading HIF-1A through interaction with PSMA7. The chain is Aminoacyl tRNA synthase complex-interacting multifunctional protein 1 (AIMP1) from Homo sapiens (Human).